A 437-amino-acid chain; its full sequence is UDP-glucosyl transferase 79L3 (437 aa).

H18 acts as the Proton acceptor in catalysis. Residue D117 is the Charge relay of the active site. Residues S254, W312, V313, H330, S335, and E338 each contribute to the UDP site.

The protein belongs to the UDP-glycosyltransferase family. Mainly expressed in flowers, flower buds and young leaves, and, to a lesser extent, in old leaves, stems and roots.

It participates in secondary metabolite biosynthesis; terpenoid biosynthesis. Functionally, component of the oleanane-type triterpene saponins (e.g. saponarioside A and saponarioside B) biosynthetic pathway, leading to the production of natural products with detergent properties used as traditional sources of soap. A glycosyltransferase that mediates the conversion of QA-triFR to QA-triFRX via the elongation of the C-28 sugar chain with a D-xylose. The polypeptide is UDP-glucosyl transferase 79L3 (Saponaria officinalis (Common soapwort)).